Reading from the N-terminus, the 822-residue chain is MRRASRSPFILSPVAHAVSRLVLCATLGWTYAGSGHAQVPAPAGGSEVPLGARPPASAPVAAQQETPLKLKSSPALAEEVPNGPGDEGPTFVFGDSVSGRPNLETVIDGNAELRRGATSIRADRIEYYQPEDRVKSRGNVRINNAGNRFEGPELEITLDRFEGFFTQPRYRFLSNGGNGQAERVDFIDDKHLTAHRASYTTCERDNEASWKPAWELRARSFEFDFDEEVGVANGAVLRFKNVPILGFPKFSFPLSDKRKSGLLPPTLNMSSVNGFEVRQPYYFDIAPNRDATFSPAIMTKRGVDLAGEFRYLEPTYKGELRANILPGDKLRNRDRWSYGYQHSGTIDSGLSAIGNLGVNLNLSRVSDNDYWRDFPIASNSTTQRLLAQDATVSWNRGFFAAAVRTLKWQTLQDLSAPIVPPYDRLPQFTANYTRVDAPLLGLGRGFDWSVEGDYTRFSADRTLTGQPNSNRAFTRAQLSHPWLSPAGFITPKMQLHATSYQFDAPLVNGARSASRTVPTFSLDSGLQFERQAGFLGRSFTQTLEPRAFYVRTPYRDQSLLPNYDSGANDFNFATVFTENAFVGNDRISDANLLTLGVTSRLLDPATGAEAVRVGVAQRLRFADQRVTLPGALPITDRISDLLVGASVNWVPQWSFDSTVQYNPKTKQSERSSIGVRYNPGNYRVISAAYRRQRNISEQIDVGWQWPLNDLWGDKGRDLGAGQGQGGGRYYAVGRLNYSVPDRKLVDAIVGVEYDGCCWIGRVVLQRTQNGTATSDTRILFQLELVGFSRIGANPLETLKSNVPRYQYLREKINTPSRFTTYD.

The signal sequence occupies residues 1–37 (MRRASRSPFILSPVAHAVSRLVLCATLGWTYAGSGHA). A disordered region spans residues 38 to 97 (QVPAPAGGSEVPLGARPPASAPVAAQQETPLKLKSSPALAEEVPNGPGDEGPTFVFGDSV).

The protein belongs to the LptD family. In terms of assembly, component of the lipopolysaccharide transport and assembly complex. Interacts with LptE and LptA.

It localises to the cell outer membrane. In terms of biological role, together with LptE, is involved in the assembly of lipopolysaccharide (LPS) at the surface of the outer membrane. The protein is LPS-assembly protein LptD of Polaromonas sp. (strain JS666 / ATCC BAA-500).